An 807-amino-acid chain; its full sequence is Glycerol-3-phosphate acyltransferase (807 aa).

The HXXXXD motif motif lies at 306–311; it reads HRSHMD.

It belongs to the GPAT/DAPAT family.

It localises to the cell inner membrane. The catalysed reaction is sn-glycerol 3-phosphate + an acyl-CoA = a 1-acyl-sn-glycero-3-phosphate + CoA. It functions in the pathway phospholipid metabolism; CDP-diacylglycerol biosynthesis; CDP-diacylglycerol from sn-glycerol 3-phosphate: step 1/3. The chain is Glycerol-3-phosphate acyltransferase (plsB) from Escherichia coli O157:H7.